A 931-amino-acid polypeptide reads, in one-letter code: Semaphorin-6C (931 aa).

An N-terminal signal peptide occupies residues Met1–Ala25. The Extracellular portion of the chain corresponds to Ala26 to Pro605. The Sema domain maps to Pro31–Leu517. A glycan (N-linked (GlcNAc...) asparagine) is linked at Asn71. 4 cysteine pairs are disulfide-bonded: Cys112/Cys122, Cys140/Cys149, Cys263/Cys374, and Cys288/Cys333. Asn287 carries an N-linked (GlcNAc...) asparagine glycan. Asn438 is a glycosylation site (N-linked (GlcNAc...) asparagine). 4 disulfide bridges follow: Cys480–Cys511, Cys520–Cys538, Cys526–Cys571, and Cys530–Cys546. Residues Asp556–Arg591 form a disordered region. The chain crosses the membrane as a helical span at residues Leu606 to Val626. The Cytoplasmic segment spans residues Ser627–Phe931. Disordered stretches follow at residues Leu655–Ala747 and His777–Phe931. Low complexity predominate over residues Pro693–Leu708. The span at Pro893–Val906 shows a compositional bias: basic and acidic residues. Positions Ser911–Ala923 are enriched in pro residues.

It belongs to the semaphorin family.

Its subcellular location is the cell membrane. May be a stop signal for the dorsal root ganglion neurons in their target areas, and possibly also for other neurons. May also be involved in the maintenance and remodeling of neuronal connections. This is Semaphorin-6C (Sema6c) from Mus musculus (Mouse).